Consider the following 646-residue polypeptide: UvrABC system protein B (646 aa).

The Helicase ATP-binding domain occupies 29-411; the sequence is LEKNPEKSKQ…SNQVVEQIIR (383 aa). 42–49 is a binding site for ATP; sequence GVTGSGKT. The Beta-hairpin signature appears at 95–118; the sequence is YYDYYQPESYIPQKDQYIEKDAQI. The region spanning 428–590 is the Helicase C-terminal domain; it reads QVEDIIKETE…ITPQTIVKPI (163 aa). The region spanning 609-644 is the UVR domain; sequence PNVIVELEAEMYEAAEALEFEKAIKIRDTIAKLKKK.

This sequence belongs to the UvrB family. In terms of assembly, forms a heterotetramer with UvrA during the search for lesions. Interacts with UvrC in an incision complex.

The protein resides in the cytoplasm. Functionally, the UvrABC repair system catalyzes the recognition and processing of DNA lesions. A damage recognition complex composed of 2 UvrA and 2 UvrB subunits scans DNA for abnormalities. Upon binding of the UvrA(2)B(2) complex to a putative damaged site, the DNA wraps around one UvrB monomer. DNA wrap is dependent on ATP binding by UvrB and probably causes local melting of the DNA helix, facilitating insertion of UvrB beta-hairpin between the DNA strands. Then UvrB probes one DNA strand for the presence of a lesion. If a lesion is found the UvrA subunits dissociate and the UvrB-DNA preincision complex is formed. This complex is subsequently bound by UvrC and the second UvrB is released. If no lesion is found, the DNA wraps around the other UvrB subunit that will check the other stand for damage. This chain is UvrABC system protein B, found in Methanococcus maripaludis (strain DSM 14266 / JCM 13030 / NBRC 101832 / S2 / LL).